Consider the following 279-residue polypeptide: MGFIKSTLLATVTVFVGLCGINRFFTLPKCIRYHFRYFACHTFLAISSAYGVIASVVARLCGYPVMGQYLTAKAYYGLASTILDFRFKIENEEILRKHKSAVLVVNHQSELDILAIGRTFGPNYSVIAKKSLRYVPILGWFMILSDVVFIDRSRRSDAIQLFAKAARRMRKENISIWVFAEGTRSYSLKPCLLPLKKGAFHLAVQAQVPIIPIAIQTYGHLFHPPTKVFNKGEALIKVLDPIPTEGKTAEDVNDLLHETETAMNNALVEIDDYGKVKKQ.

Transmembrane regions (helical) follow at residues 1–21, 38–58, and 131–151; these read MGFIKSTLLATVTVFVGLCGI, FACHTFLAISSAYGVIASVVA, and SLRYVPILGWFMILSDVVFID.

The protein belongs to the 1-acyl-sn-glycerol-3-phosphate acyltransferase family.

The protein localises to the endoplasmic reticulum membrane. This is an uncharacterized protein from Schizosaccharomyces pombe (strain 972 / ATCC 24843) (Fission yeast).